An 80-amino-acid chain; its full sequence is Kappa-actitoxin-Avd4i (80 aa).

The signal sequence occupies residues 1 to 19; sequence MNKALFLCLVVLCAAVVFA. The propeptide occupies 20-31; sequence AEDLQKAKHAPF. 3 disulfides stabilise this stretch: cysteine 41–cysteine 76, cysteine 43–cysteine 69, and cysteine 59–cysteine 77.

The protein belongs to the sea anemone type 3 (BDS) potassium channel toxin family. Weakly expressed in the ectodermal tissue from the distal and proximal tentacles, body wall, and oral disk.

Its subcellular location is the secreted. It localises to the nematocyst. Functionally, blocks Kv3 voltage-gated potassium channels. Reduces blood pressure. The chain is Kappa-actitoxin-Avd4i from Anemonia viridis (Snakelocks anemone).